A 220-amino-acid chain; its full sequence is Glycerol-3-phosphate acyltransferase (220 aa).

Transmembrane regions (helical) follow at residues 11–31 (INVIFTLLGYLIGGIPFGYAL), 70–90 (LLVLILDLFKGMFAVFLSKLF), 96–116 (LQWMVAIASILGHCYSPFLNF), 127–147 (GSVVLLIPIESLIGLTVWFFV), 153–173 (ISSLASILGVGTATVLIFFVP), and 193–213 (MVLIFIFTLIKHAGNIFNLLA).

Belongs to the PlsY family. In terms of assembly, probably interacts with PlsX.

The protein resides in the cell inner membrane. It carries out the reaction an acyl phosphate + sn-glycerol 3-phosphate = a 1-acyl-sn-glycero-3-phosphate + phosphate. It participates in lipid metabolism; phospholipid metabolism. Its function is as follows. Catalyzes the transfer of an acyl group from acyl-phosphate (acyl-PO(4)) to glycerol-3-phosphate (G3P) to form lysophosphatidic acid (LPA). This enzyme utilizes acyl-phosphate as fatty acyl donor, but not acyl-CoA or acyl-ACP. The protein is Glycerol-3-phosphate acyltransferase of Helicobacter pylori (strain HPAG1).